A 328-amino-acid polypeptide reads, in one-letter code: Beta-ketoacyl-[acyl-carrier-protein] synthase III (328 aa).

Catalysis depends on residues Cys-122 and His-255. An ACP-binding region spans residues 256-260; sequence QANVR. Asn-285 is an active-site residue.

The protein belongs to the thiolase-like superfamily. FabH family. In terms of assembly, homodimer.

Its subcellular location is the cytoplasm. The catalysed reaction is malonyl-[ACP] + acetyl-CoA + H(+) = 3-oxobutanoyl-[ACP] + CO2 + CoA. It functions in the pathway lipid metabolism; fatty acid biosynthesis. Its function is as follows. Catalyzes the condensation reaction of fatty acid synthesis by the addition to an acyl acceptor of two carbons from malonyl-ACP. Catalyzes the first condensation reaction which initiates fatty acid synthesis and may therefore play a role in governing the total rate of fatty acid production. Possesses both acetoacetyl-ACP synthase and acetyl transacylase activities. Its substrate specificity determines the biosynthesis of branched-chain and/or straight-chain of fatty acids. The chain is Beta-ketoacyl-[acyl-carrier-protein] synthase III from Bordetella avium (strain 197N).